The chain runs to 186 residues: Peptidyl-tRNA hydrolase (186 aa).

The Proton acceptor role is filled by His19. TRNA-binding residues include Phe64, Asn66, and Asn112.

This sequence belongs to the PTH family. In terms of assembly, monomer.

It localises to the cytoplasm. The enzyme catalyses an N-acyl-L-alpha-aminoacyl-tRNA + H2O = an N-acyl-L-amino acid + a tRNA + H(+). In terms of biological role, hydrolyzes ribosome-free peptidyl-tRNAs (with 1 or more amino acids incorporated), which drop off the ribosome during protein synthesis, or as a result of ribosome stalling. Catalyzes the release of premature peptidyl moieties from peptidyl-tRNA molecules trapped in stalled 50S ribosomal subunits, and thus maintains levels of free tRNAs and 50S ribosomes. This is Peptidyl-tRNA hydrolase from Pelagibacter ubique (strain HTCC1062).